We begin with the raw amino-acid sequence, 78 residues long: UPF0154 protein lp_2061 (78 aa).

The chain crosses the membrane as a helical span at residues 5–27 (TGIWILIVVIGVLVGLTGGFFGA).

The protein belongs to the UPF0154 family.

The protein resides in the membrane. The polypeptide is UPF0154 protein lp_2061 (Lactiplantibacillus plantarum (strain ATCC BAA-793 / NCIMB 8826 / WCFS1) (Lactobacillus plantarum)).